The following is a 31-amino-acid chain: Scolopendra 20566.01 Da toxin (31 aa).

The protein belongs to the CRISP family. Venom allergen 5-like subfamily. Post-translationally, contains 3 disulfide bonds. As to expression, expressed by the venom gland.

It is found in the secreted. This chain is Scolopendra 20566.01 Da toxin, found in Scolopendra angulata (Barbados giant red centipede).